Consider the following 305-residue polypeptide: Protein hrde-2 (305 aa).

Disordered regions lie at residues 211 to 233 and 267 to 305; these read AEMV…PVPA and EMSN…EYCQ. The span at 215–227 shows a compositional bias: polar residues; that stretch reads PSNTTGSSGSPMS. Acidic residues predominate over residues 268 to 287; it reads MSNDEYSPDESENDENEYDY. Basic and acidic residues predominate over residues 289–305; the sequence is NAARYDDGYDEGHEYCQ.

In terms of tissue distribution, expressed throughout the male and female germline.

The protein localises to the nucleus. Its function is as follows. Plays a role in germline RNA interference (RNAi), and in particular is required for piwi-interacting RNA (piRNA) gene silencing. Facilitates the binding of the argonaut protein hrde-1 to small interfering RNAs (siRNAs) targets that are required for transgenerational epigenetic inheritance and germline immortality. This is Protein hrde-2 from Caenorhabditis elegans.